We begin with the raw amino-acid sequence, 470 residues long: Argininosuccinate lyase (470 aa).

The protein belongs to the lyase 1 family. Argininosuccinate lyase subfamily.

The protein resides in the cytoplasm. The catalysed reaction is 2-(N(omega)-L-arginino)succinate = fumarate + L-arginine. The protein operates within amino-acid biosynthesis; L-arginine biosynthesis; L-arginine from L-ornithine and carbamoyl phosphate: step 3/3. The protein is Argininosuccinate lyase of Mycolicibacterium gilvum (strain PYR-GCK) (Mycobacterium gilvum (strain PYR-GCK)).